The sequence spans 225 residues: Insulin-induced gene 2 protein (225 aa).

Over Met-1–Leu-28 the chain is Cytoplasmic. The chain crosses the membrane as a helical span at residues Val-29 to Ile-51. Residues Gln-52 to Ala-70 are Lumenal-facing. The chain crosses the membrane as a helical span at residues Trp-71–Tyr-88. At Pro-89–Arg-103 the chain is on the cytoplasmic side. A helical transmembrane segment spans residues Glu-104–Asp-126. Residues Phe-127–Asn-129 are Lumenal-facing. A helical membrane pass occupies residues Asn-130–Phe-148. The Cytoplasmic segment spans residues Asp-149 to Ser-153. A helical membrane pass occupies residues Gly-154 to Asn-175. Residues Gly-176–Arg-189 are Lumenal-facing. Residues Ser-190–Gly-207 traverse the membrane as a helical segment. Topologically, residues Arg-208–Asp-225 are cytoplasmic. Positions Ala-219 to Asp-225 match the KxHxx motif.

It belongs to the INSIG family. As to quaternary structure, interacts with SCAP; interaction is direct and only takes place in the presence of sterols; it prevents interaction between SCAP and the coat protein complex II (COPII). Associates with the SCAP-SREBP complex; association is mediated via its interaction with SCAP and only takes place in the presence of sterols.

The protein localises to the endoplasmic reticulum membrane. Functionally, oxysterol-binding protein that mediates feedback control of cholesterol synthesis by controlling both endoplasmic reticulum to Golgi transport of SCAP and degradation of HMGCR. Acts as a negative regulator of cholesterol biosynthesis by mediating the retention of the SCAP-SREBP complex in the endoplasmic reticulum, thereby blocking the processing of sterol regulatory element-binding proteins (SREBPs). Binds oxysterol, including 22-hydroxycholesterol, 24-hydroxycholesterol, 25-hydroxycholesterol and 27-hydroxycholesterol, regulating interaction with SCAP and retention of the SCAP-SREBP complex in the endoplasmic reticulum. In presence of oxysterol, interacts with SCAP, retaining the SCAP-SREBP complex in the endoplasmic reticulum, thereby preventing SCAP from escorting SREBPs to the Golgi. Sterol deprivation reduces oxysterol-binding, disrupting the interaction between INSIG2 and SCAP, thereby promoting Golgi transport of the SCAP-SREBP complex, followed by processing and nuclear translocation of SREBPs. Also regulates cholesterol synthesis by regulating degradation of HMGCR. The protein is Insulin-induced gene 2 protein of Gallus gallus (Chicken).